The following is a 420-amino-acid chain: D-tagatose-1,6-bisphosphate aldolase subunit GatZ (420 aa).

This sequence belongs to the GatZ/KbaZ family. GatZ subfamily. In terms of assembly, forms a complex with GatY.

Its pathway is carbohydrate metabolism; D-tagatose 6-phosphate degradation; D-glyceraldehyde 3-phosphate and glycerone phosphate from D-tagatose 6-phosphate: step 2/2. Functionally, component of the tagatose-1,6-bisphosphate aldolase GatYZ that is required for full activity and stability of the Y subunit. Could have a chaperone-like function for the proper and stable folding of GatY. When expressed alone, GatZ does not show any aldolase activity. Is involved in the catabolism of galactitol. This Escherichia coli O139:H28 (strain E24377A / ETEC) protein is D-tagatose-1,6-bisphosphate aldolase subunit GatZ.